Reading from the N-terminus, the 624-residue chain is Alpha-galactosidase 3 (624 aa).

Positions 1–22 are cleaved as a signal peptide; sequence MSPSAAVLIPLAAAVLLRPVVG. Asn37, Asn56, Asn197, Asn259, and Asn293 each carry an N-linked (GlcNAc...) asparagine glycan. The active-site Nucleophile is Asp347. N-linked (GlcNAc...) asparagine glycosylation is present at Asn393. Asp412 functions as the Proton donor in the catalytic mechanism. N-linked (GlcNAc...) asparagine glycosylation is present at Asn469.

Belongs to the glycosyl hydrolase 27 family.

The protein resides in the secreted. The catalysed reaction is Hydrolysis of terminal, non-reducing alpha-D-galactose residues in alpha-D-galactosides, including galactose oligosaccharides, galactomannans and galactolipids.. Its function is as follows. Alpha-galactosidase involved in the degradation of simple oligosaccharides like melibiose, raffinose and stachyose, and of polymeric galacto(gluco)mannans. The polypeptide is Alpha-galactosidase 3 (agl3) (Hypocrea jecorina (Trichoderma reesei)).